Here is a 201-residue protein sequence, read N- to C-terminus: Holliday junction branch migration complex subunit RuvA (201 aa).

Residues 1–63 form a domain I region; sequence MYDYIKGTVT…EDNISLFGFQ (63 aa). The interval 64 to 142 is domain II; sequence TTEERYLFKK…DVVASEIVYV (79 aa). A flexible linker region spans residues 143–153; the sequence is APENDMVAGLS. The tract at residues 153-201 is domain III; that stretch reads SPQLEEAVLALEALGYSTRELKKVIPKLAKEADLTSDAYIKLALQLMTK.

Belongs to the RuvA family. Homotetramer. Forms an RuvA(8)-RuvB(12)-Holliday junction (HJ) complex. HJ DNA is sandwiched between 2 RuvA tetramers; dsDNA enters through RuvA and exits via RuvB. An RuvB hexamer assembles on each DNA strand where it exits the tetramer. Each RuvB hexamer is contacted by two RuvA subunits (via domain III) on 2 adjacent RuvB subunits; this complex drives branch migration. In the full resolvosome a probable DNA-RuvA(4)-RuvB(12)-RuvC(2) complex forms which resolves the HJ.

It is found in the cytoplasm. Its function is as follows. The RuvA-RuvB-RuvC complex processes Holliday junction (HJ) DNA during genetic recombination and DNA repair, while the RuvA-RuvB complex plays an important role in the rescue of blocked DNA replication forks via replication fork reversal (RFR). RuvA specifically binds to HJ cruciform DNA, conferring on it an open structure. The RuvB hexamer acts as an ATP-dependent pump, pulling dsDNA into and through the RuvAB complex. HJ branch migration allows RuvC to scan DNA until it finds its consensus sequence, where it cleaves and resolves the cruciform DNA. This chain is Holliday junction branch migration complex subunit RuvA, found in Listeria monocytogenes serovar 1/2a (strain ATCC BAA-679 / EGD-e).